We begin with the raw amino-acid sequence, 288 residues long: Phenazine biosynthesis-like domain-containing protein 2 (288 aa).

Residue E46 is part of the active site.

It belongs to the PhzF family.

The polypeptide is Phenazine biosynthesis-like domain-containing protein 2 (Pbld2) (Mus musculus (Mouse)).